A 176-amino-acid chain; its full sequence is ATP-dependent protease subunit HslV (176 aa).

The active site involves threonine 5. Residues alanine 161, cysteine 164, and threonine 167 each contribute to the Na(+) site.

Belongs to the peptidase T1B family. HslV subfamily. In terms of assembly, a double ring-shaped homohexamer of HslV is capped on each side by a ring-shaped HslU homohexamer. The assembly of the HslU/HslV complex is dependent on binding of ATP.

Its subcellular location is the cytoplasm. The enzyme catalyses ATP-dependent cleavage of peptide bonds with broad specificity.. Allosterically activated by HslU binding. In terms of biological role, protease subunit of a proteasome-like degradation complex believed to be a general protein degrading machinery. This chain is ATP-dependent protease subunit HslV, found in Pelotomaculum thermopropionicum (strain DSM 13744 / JCM 10971 / SI).